The following is a 553-amino-acid chain: Solute carrier family 22 member 12 (553 aa).

The helical transmembrane segment at 10–30 threads the bilayer; it reads VGGLGRFQLFQTVALVTPILW. The N-linked (GlcNAc...) asparagine glycan is linked to Asn56. The next 11 membrane-spanning stretches (helical) occupy residues 146–166, 182–202, 204–224, 232–252, 260–280, 351–371, 378–398, 412–432, 435–455, 466–486, and 495–515; these read PMAQ…CGHA, LVSV…YCLF, FLLA…LMEW, LVMT…GSVA, MLQL…WWLP, IISM…ALDL, IFLL…GSLL, FLVL…GMGV, SALA…ITIF, MTAV…GPLV, and WMPL…ALLL. The residue at position 534 (Ser534) is a Phosphoserine. Residue Thr542 is modified to Phosphothreonine.

The protein belongs to the major facilitator (TC 2.A.1) superfamily. Organic cation transporter (TC 2.A.1.19) family. In terms of assembly, interacts with PDZK1. Post-translationally, N-glycosylated. Detected in kidney (at protein level). Detected in kidney cortex, in proximal tubules.

The protein localises to the apical cell membrane. The catalysed reaction is urate(out) + (S)-lactate(in) = urate(in) + (S)-lactate(out). It catalyses the reaction nicotinate(in) + urate(out) = nicotinate(out) + urate(in). The enzyme catalyses urate(out) + n chloride(in) = urate(in) + n chloride(out). It carries out the reaction orotate(out) + nicotinate(in) = orotate(in) + nicotinate(out). In terms of biological role, electroneutral antiporter that translocates urate across the apical membrane of proximal tubular cells in exchange for monovalent organic or inorganic anions. Involved in renal reabsorption of urate and helps maintaining blood levels of uric acid. Mediates urate uptake by an exchange with organic anions such as (S)-lactate and nicotinate, and inorganic anion Cl(-). Other inorganic anions such as Br(-), I(-) and NO3(-) may also act as counteranions that exchange for urate. Also mediates orotate tubular uptake coupled with nicotinate efflux and to a lesser extent with lactate efflux, therefore displaying a potential role in orotate renal reabsorption. Orotate transport is Cl(-)-dependent. This Mus musculus (Mouse) protein is Solute carrier family 22 member 12.